A 45-amino-acid chain; its full sequence is uncharacterized protein (45 aa).

It belongs to the asfivirus C62L family.

This is an uncharacterized protein from Ornithodoros (relapsing fever ticks).